The primary structure comprises 91 residues: Acyl carrier protein (91 aa).

The Carrier domain maps to 4–79; that stretch reads QQILDKVQSI…QAVDYILQHK (76 aa). Residue serine 39 is modified to O-(pantetheine 4'-phosphoryl)serine.

It belongs to the acyl carrier protein (ACP) family. 4'-phosphopantetheine is transferred from CoA to a specific serine of apo-ACP by AcpS. This modification is essential for activity because fatty acids are bound in thioester linkage to the sulfhydryl of the prosthetic group.

The protein resides in the plastid. The protein localises to the chloroplast. It functions in the pathway lipid metabolism; fatty acid biosynthesis. In terms of biological role, carrier of the growing fatty acid chain in fatty acid biosynthesis. The polypeptide is Acyl carrier protein (Cyanidioschyzon merolae (strain NIES-3377 / 10D) (Unicellular red alga)).